A 432-amino-acid chain; its full sequence is Glutamate-1-semialdehyde 2,1-aminomutase (432 aa).

Lys-267 is modified (N6-(pyridoxal phosphate)lysine).

This sequence belongs to the class-III pyridoxal-phosphate-dependent aminotransferase family. HemL subfamily. In terms of assembly, homodimer. It depends on pyridoxal 5'-phosphate as a cofactor.

The protein localises to the cytoplasm. It carries out the reaction (S)-4-amino-5-oxopentanoate = 5-aminolevulinate. The protein operates within porphyrin-containing compound metabolism; protoporphyrin-IX biosynthesis; 5-aminolevulinate from L-glutamyl-tRNA(Glu): step 2/2. This is Glutamate-1-semialdehyde 2,1-aminomutase from Rhodococcus erythropolis (strain PR4 / NBRC 100887).